Consider the following 259-residue polypeptide: GTP-binding protein RHO4 (259 aa).

59–66 (GDGATGKT) provides a ligand contact to GTP. The short motif at 81–89 (YVPTIFENY) is the Effector region element. Residues 107–111 (DTAGQ) and 165–168 (LKSD) each bind GTP. Cys-256 carries the cysteine methyl ester modification. Cys-256 carries S-geranylgeranyl cysteine lipidation. Positions 257–259 (VVL) are cleaved as a propeptide — removed in mature form.

Belongs to the small GTPase superfamily. Rho family.

It localises to the cell membrane. The protein is GTP-binding protein RHO4 (RHO4) of Eremothecium gossypii (strain ATCC 10895 / CBS 109.51 / FGSC 9923 / NRRL Y-1056) (Yeast).